Here is a 217-residue protein sequence, read N- to C-terminus: Probable transaldolase (217 aa).

Residue Lys-83 is the Schiff-base intermediate with substrate of the active site.

This sequence belongs to the transaldolase family. Type 3B subfamily.

It is found in the cytoplasm. The catalysed reaction is D-sedoheptulose 7-phosphate + D-glyceraldehyde 3-phosphate = D-erythrose 4-phosphate + beta-D-fructose 6-phosphate. Its pathway is carbohydrate degradation; pentose phosphate pathway; D-glyceraldehyde 3-phosphate and beta-D-fructose 6-phosphate from D-ribose 5-phosphate and D-xylulose 5-phosphate (non-oxidative stage): step 2/3. Functionally, transaldolase is important for the balance of metabolites in the pentose-phosphate pathway. This Brucella melitensis biotype 1 (strain ATCC 23456 / CCUG 17765 / NCTC 10094 / 16M) protein is Probable transaldolase.